The primary structure comprises 1366 residues: DNA-directed RNA polymerase subunit beta (1366 aa).

The protein belongs to the RNA polymerase beta chain family. As to quaternary structure, the RNAP catalytic core consists of 2 alpha, 1 beta, 1 beta' and 1 omega subunit. When a sigma factor is associated with the core the holoenzyme is formed, which can initiate transcription.

The catalysed reaction is RNA(n) + a ribonucleoside 5'-triphosphate = RNA(n+1) + diphosphate. Its function is as follows. DNA-dependent RNA polymerase catalyzes the transcription of DNA into RNA using the four ribonucleoside triphosphates as substrates. This chain is DNA-directed RNA polymerase subunit beta, found in Polynucleobacter asymbioticus (strain DSM 18221 / CIP 109841 / QLW-P1DMWA-1) (Polynucleobacter necessarius subsp. asymbioticus).